Consider the following 1164-residue polypeptide: Shugoshin 2A (1164 aa).

A coiled-coil region spans residues 62–113 (LSKEKENSRRITTEKMQLQKEVEKLNFENTFLRLKLNTLNKKLVEIESHVSN). Disordered stretches follow at residues 160 to 269 (SEND…VTMR), 287 to 314 (HQPT…NTQR), 390 to 492 (RKVK…PFSR), 521 to 541 (TFVI…DKDT), and 917 to 992 (PLDS…ETHG). Residues 182–198 (SKTSPDSTSSVSRQPSS) show a composition bias toward low complexity. Composition is skewed to polar residues over residues 238-247 (DQSPKSSLSE) and 288-299 (QPTSSPGSNWNN). The span at 390 to 412 (RKVKGASSDKKRESSKRECKDGS) shows a compositional bias: basic and acidic residues. Residues 443–472 (CISSTEQPSQVNTQKKRTLQNSSDQENIQN) show a composition bias toward polar residues. The segment covering 525 to 541 (RKSEKDNLFPNQEDKDT) has biased composition (basic and acidic residues). A compositionally biased stretch (polar residues) spans 934 to 948 (GEQTNLPKMQKQSAG). Residue Ser-1042 is modified to Phosphoserine. The disordered stretch occupies residues 1092 to 1164 (ITTGTRNPHH…EPSLRSKMRR (73 aa)). The span at 1112–1125 (TSLVLVDTSSVSDT) shows a compositional bias: low complexity. The span at 1126-1140 (NPANPENESEGQSSH) shows a compositional bias: polar residues.

It belongs to the shugoshin family. Part of an astrin (SPAG5)-kinastrin (SKAP) complex containing KNSTRN, SPAG5, PLK1, DYNLL1 and SGO2A. Interacts with CDCA8. Interacts with PPP2CA. In terms of tissue distribution, ubiquitously expressed in proliferating cells. Highly expressed in the testis and oocytes.

It localises to the nucleus. The protein localises to the chromosome. The protein resides in the centromere. Its subcellular location is the kinetochore. Functionally, cooperates with PPP2CA to protect centromeric cohesin from separase-mediated cleavage in oocytes specifically during meiosis I. Has a crucial role in protecting REC8 at centromeres from cleavage by separase. During meiosis, protects centromeric cohesion complexes until metaphase II/anaphase II transition, preventing premature release of meiosis-specific REC8 cohesin complexes from anaphase I centromeres. Is thus essential for an accurate gametogenesis. May act by targeting PPP2CA to centromeres, thus leading to cohesin dephosphorylation. Essential for recruiting KIF2C to the inner centromere and for correcting defective kinetochore attachments. Involved in centromeric enrichment of AUKRB in prometaphase. This Mus musculus (Mouse) protein is Shugoshin 2A.